Here is a 448-residue protein sequence, read N- to C-terminus: Adenosylhomocysteinase (448 aa).

Residues Thr61, Asp136, and Glu161 each coordinate substrate. NAD(+) is bound at residue 162–164 (TTA). 2 residues coordinate substrate: Lys191 and Asp195. NAD(+)-binding positions include Asn196, 225–230 (GYGDVG), Glu248, Asn283, 304–306 (IGH), and Asn360.

The protein belongs to the adenosylhomocysteinase family. It depends on NAD(+) as a cofactor.

It is found in the cytoplasm. The enzyme catalyses S-adenosyl-L-homocysteine + H2O = L-homocysteine + adenosine. It functions in the pathway amino-acid biosynthesis; L-homocysteine biosynthesis; L-homocysteine from S-adenosyl-L-homocysteine: step 1/1. May play a key role in the regulation of the intracellular concentration of adenosylhomocysteine. This chain is Adenosylhomocysteinase, found in Rhodopirellula baltica (strain DSM 10527 / NCIMB 13988 / SH1).